Consider the following 376-residue polypeptide: Ribosomal RNA large subunit methyltransferase G (376 aa).

The protein belongs to the methyltransferase superfamily. RlmG family.

Its subcellular location is the cytoplasm. It carries out the reaction guanosine(1835) in 23S rRNA + S-adenosyl-L-methionine = N(2)-methylguanosine(1835) in 23S rRNA + S-adenosyl-L-homocysteine + H(+). Specifically methylates the guanine in position 1835 (m2G1835) of 23S rRNA. This chain is Ribosomal RNA large subunit methyltransferase G, found in Vibrio vulnificus (strain CMCP6).